A 184-amino-acid chain; its full sequence is NADH-quinone oxidoreductase subunit B (184 aa).

4 residues coordinate [4Fe-4S] cluster: cysteine 37, cysteine 38, cysteine 103, and cysteine 132.

This sequence belongs to the complex I 20 kDa subunit family. NDH-1 is composed of 14 different subunits. Subunits NuoB, C, D, E, F, and G constitute the peripheral sector of the complex. The cofactor is [4Fe-4S] cluster.

It is found in the cell membrane. It catalyses the reaction a quinone + NADH + 5 H(+)(in) = a quinol + NAD(+) + 4 H(+)(out). NDH-1 shuttles electrons from NADH, via FMN and iron-sulfur (Fe-S) centers, to quinones in the respiratory chain. The immediate electron acceptor for the enzyme in this species is believed to be a menaquinone. Couples the redox reaction to proton translocation (for every two electrons transferred, four hydrogen ions are translocated across the cytoplasmic membrane), and thus conserves the redox energy in a proton gradient. This chain is NADH-quinone oxidoreductase subunit B, found in Nocardioides sp. (strain ATCC BAA-499 / JS614).